A 231-amino-acid polypeptide reads, in one-letter code: Cytochrome c oxidase subunit 2 (231 aa).

Topologically, residues 1–14 (MATPAQLGLQNATS) are mitochondrial intermembrane. The chain crosses the membrane as a helical span at residues 15–45 (PIMEELIAFHDHALMIIFLISSLVLYIISLM). Residues 46-59 (LTTKLTHTSTMNAQ) lie on the Mitochondrial matrix side of the membrane. Residues 60–87 (EIEMIWTILPAIILIMIALPSLRILYMT) traverse the membrane as a helical segment. At 88–231 (DEFNKPYLTL…WASYLYIVSL (144 aa)) the chain is on the mitochondrial intermembrane side. Positions 161, 196, 198, 200, 204, and 207 each coordinate Cu cation. Glutamate 198 contacts Mg(2+).

This sequence belongs to the cytochrome c oxidase subunit 2 family. As to quaternary structure, component of the cytochrome c oxidase (complex IV, CIV), a multisubunit enzyme composed of 14 subunits. The complex is composed of a catalytic core of 3 subunits MT-CO1, MT-CO2 and MT-CO3, encoded in the mitochondrial DNA, and 11 supernumerary subunits COX4I, COX5A, COX5B, COX6A, COX6B, COX6C, COX7A, COX7B, COX7C, COX8 and NDUFA4, which are encoded in the nuclear genome. The complex exists as a monomer or a dimer and forms supercomplexes (SCs) in the inner mitochondrial membrane with NADH-ubiquinone oxidoreductase (complex I, CI) and ubiquinol-cytochrome c oxidoreductase (cytochrome b-c1 complex, complex III, CIII), resulting in different assemblies (supercomplex SCI(1)III(2)IV(1) and megacomplex MCI(2)III(2)IV(2)). Found in a complex with TMEM177, COA6, COX18, COX20, SCO1 and SCO2. Interacts with TMEM177 in a COX20-dependent manner. Interacts with COX20. Interacts with COX16. Cu cation serves as cofactor.

Its subcellular location is the mitochondrion inner membrane. It catalyses the reaction 4 Fe(II)-[cytochrome c] + O2 + 8 H(+)(in) = 4 Fe(III)-[cytochrome c] + 2 H2O + 4 H(+)(out). Its function is as follows. Component of the cytochrome c oxidase, the last enzyme in the mitochondrial electron transport chain which drives oxidative phosphorylation. The respiratory chain contains 3 multisubunit complexes succinate dehydrogenase (complex II, CII), ubiquinol-cytochrome c oxidoreductase (cytochrome b-c1 complex, complex III, CIII) and cytochrome c oxidase (complex IV, CIV), that cooperate to transfer electrons derived from NADH and succinate to molecular oxygen, creating an electrochemical gradient over the inner membrane that drives transmembrane transport and the ATP synthase. Cytochrome c oxidase is the component of the respiratory chain that catalyzes the reduction of oxygen to water. Electrons originating from reduced cytochrome c in the intermembrane space (IMS) are transferred via the dinuclear copper A center (CU(A)) of subunit 2 and heme A of subunit 1 to the active site in subunit 1, a binuclear center (BNC) formed by heme A3 and copper B (CU(B)). The BNC reduces molecular oxygen to 2 water molecules using 4 electrons from cytochrome c in the IMS and 4 protons from the mitochondrial matrix. This Aotus nigriceps (Black-headed night monkey) protein is Cytochrome c oxidase subunit 2 (MT-CO2).